The primary structure comprises 437 residues: Protein arginine methyltransferase NDUFAF7, mitochondrial (437 aa).

A mitochondrion-targeting transit peptide spans 1–42 (MSGLARLQRLQKFGFLMVSASANRPIQRYQCSRTEKPQKRTS).

The protein belongs to the NDUFAF7 family.

It is found in the mitochondrion. It carries out the reaction L-arginyl-[protein] + 2 S-adenosyl-L-methionine = N(omega),N(omega)'-dimethyl-L-arginyl-[protein] + 2 S-adenosyl-L-homocysteine + 2 H(+). Functionally, arginine methyltransferase involved in the assembly or stability of mitochondrial NADH:ubiquinone oxidoreductase complex (complex I). Acts by mediating symmetric dimethylation of 'Arg-118' of ndufs2 after it assembles into the complex I, stabilizing the early intermediate complex. This is Protein arginine methyltransferase NDUFAF7, mitochondrial from Xenopus laevis (African clawed frog).